A 437-amino-acid chain; its full sequence is Membrane protein NfeD1b (437 aa).

A run of 5 helical transmembrane segments spans residues 2–22, 231–251, 253–273, 288–308, and 316–336; these read LQIK…LLGV, WLTN…GLTV, LFSP…LLFF, LLFI…GGII, and IIAS…SLLI.

This sequence belongs to the NfeD family.

It localises to the cell membrane. This is Membrane protein NfeD1b from Bacillus subtilis (strain 168).